The following is a 162-amino-acid chain: NADH-ubiquinone oxidoreductase 24 kDa subunit homolog C11E3.12, mitochondrial (162 aa).

4 residues coordinate [2Fe-2S] cluster: cysteine 88, cysteine 93, cysteine 125, and cysteine 129.

Belongs to the complex I 24 kDa subunit family. [2Fe-2S] cluster is required as a cofactor.

The protein localises to the mitochondrion. This chain is NADH-ubiquinone oxidoreductase 24 kDa subunit homolog C11E3.12, mitochondrial, found in Schizosaccharomyces pombe (strain 972 / ATCC 24843) (Fission yeast).